The sequence spans 274 residues: TATA box-binding protein-associated factor RNA polymerase I subunit D (274 aa).

Over residues 1–19 (MDSLNYTTACDSAVETENQ) the composition is skewed to polar residues. Disordered regions lie at residues 1–45 (MDSL…RQRN) and 84–111 (NKKR…RTTR). Residue Ser20 is modified to Phosphoserine. Basic residues predominate over residues 84 to 110 (NKKRKRKKKKYKPTGRSVGRPKGRRTT). Residues Ser132 and Ser229 each carry the phosphoserine modification.

Component of the transcription factor SL1/TIF-IB complex, composed of TBP and at least TAF1A, TAF1B, TAF1C and TAF1D. Interacts with UBTF.

Its subcellular location is the nucleus. Functionally, component of the transcription factor SL1/TIF-IB complex, which is involved in the assembly of the PIC (preinitiation complex) during RNA polymerase I-dependent transcription. The rate of PIC formation probably is primarily dependent on the rate of association of SL1/TIF-IB with the rDNA promoter. SL1/TIF-IB is involved in stabilization of nucleolar transcription factor 1/UBTF on rDNA. Formation of SL1/TIF-IB excludes the association of TBP with TFIID subunits. The chain is TATA box-binding protein-associated factor RNA polymerase I subunit D (TAF1D) from Bos taurus (Bovine).